A 538-amino-acid polypeptide reads, in one-letter code: Probable inorganic phosphate transporter 1-4 (538 aa).

At 1-23 (MAGELKVLNALDSAKTQWYHFTA) the chain is on the cytoplasmic side. The helical transmembrane segment at 24–44 (IVIAGMGFFTDAYDLFSISLV) threads the bilayer. Residues 45–69 (TKLLGRIYYFNPASKSPGSLPPNVS) lie on the Extracellular side of the membrane. A helical transmembrane segment spans residues 70–90 (AAVNGVAFCGTLAGQLFFGWL). Topologically, residues 91–98 (GDKMGRKK) are cytoplasmic. The helical transmembrane segment at 99 to 119 (VYGMTLMLMVICCLASGLSFG) threads the bilayer. The Extracellular portion of the chain corresponds to 120–123 (SSAK). The helical transmembrane segment at 124–144 (GVMATLCFFRFWLGFGIGGDY) threads the bilayer. At 145–163 (PLSATIMSEYANKRTRGAF) the chain is on the cytoplasmic side. Residues 164–184 (IAAVFAMQGFGNLTGGIVAII) form a helical membrane-spanning segment. At 185–210 (VSAAFKARFDAPAYRDDRAGSTVPQA) the chain is on the extracellular side. The helical transmembrane segment at 211–231 (DYAWRIVLMFGAIPALLTYYW) threads the bilayer. The Cytoplasmic segment spans residues 232–294 (RMKMPETARY…RQFLRRHGRH (63 aa)). The helical transmembrane segment at 295-315 (LLGTTVCWFVLDIAFYSSNLF) threads the bilayer. Residues 316–346 (QKDIYTAVQWLPKADTMSALEEMFKISRAQT) are Extracellular-facing. A helical membrane pass occupies residues 347-367 (LVALCGTIPGYWFTVFFIDII). Residues 368-369 (GR) lie on the Cytoplasmic side of the membrane. Residues 370-390 (FVIQLGGFFFMTAFMLGLAVP) form a helical membrane-spanning segment. Over 391 to 396 (YHHWTT) the chain is Extracellular. The helical transmembrane segment at 397 to 417 (PGNHIGFVVMYAFTFFFANFG) threads the bilayer. Residues 418-440 (PNSTTFIVPAEIFPARLRSTCHG) are Cytoplasmic-facing. Residues 441–461 (ISAAAGKAGAIVGSFGFLYAA) traverse the membrane as a helical segment. At 462–481 (QSTDASKTDAGYPPGIGVRN) the chain is on the extracellular side. The helical transmembrane segment at 482-502 (SLFFLAGCNVIGFFFTFLVPE) threads the bilayer. Residues 503-538 (SKGKSLEELSGENEDDDDVPEAPSTADHRTAPAPPA) are Cytoplasmic-facing. The segment at 507 to 538 (SLEELSGENEDDDDVPEAPSTADHRTAPAPPA) is disordered. The segment covering 511 to 522 (LSGENEDDDDVP) has biased composition (acidic residues).

It belongs to the major facilitator superfamily. Phosphate:H(+) symporter (TC 2.A.1.9) family.

Its subcellular location is the membrane. Functionally, high-affinity transporter for external inorganic phosphate. In Oryza sativa subsp. indica (Rice), this protein is Probable inorganic phosphate transporter 1-4 (PHT1-4).